Consider the following 396-residue polypeptide: Probable sugar efflux transporter (396 aa).

12 consecutive transmembrane segments (helical) span residues 15 to 35 (VVTL…PVGL), 50 to 70 (VGIM…PFML), 81 to 101 (LICL…SWSF), 103 to 123 (VLVI…SITA), 136 to 156 (AQAL…GLPL), 170 to 190 (FFAI…LLPL), 209 to 229 (PALM…YTAY), 246 to 266 (FATA…VIFG), 275 to 295 (TLVS…LPAA), 299 to 319 (IHLG…GLGM), 333 to 353 (VAMA…ALVG), and 364 to 384 (MIGY…IIIF).

The protein belongs to the major facilitator superfamily. SotB (TC 2.A.1.2) family.

It localises to the cell inner membrane. Functionally, involved in the efflux of sugars. The physiological role may be the reduction of the intracellular concentration of toxic sugars or sugar metabolites. The chain is Probable sugar efflux transporter from Escherichia coli (strain SMS-3-5 / SECEC).